Reading from the N-terminus, the 184-residue chain is Protein N-terminal glutamine amidohydrolase (184 aa).

Residues Cys14, His63, and Asp78 contribute to the active site.

The protein belongs to the NTAQ1 family. Monomer.

It catalyses the reaction N-terminal L-glutaminyl-[protein] + H2O = N-terminal L-glutamyl-[protein] + NH4(+). Mediates the side-chain deamidation of N-terminal glutamine residues to glutamate, an important step in N-end rule pathway of protein degradation. Conversion of the resulting N-terminal glutamine to glutamate renders the protein susceptible to arginylation, polyubiquitination and degradation as specified by the N-end rule. Does not act on substrates with internal or C-terminal glutamine and does not act on non-glutamine residues in any position. The polypeptide is Protein N-terminal glutamine amidohydrolase (Caenorhabditis elegans).